The chain runs to 46 residues: Light-harvesting protein B800/850/890 alpha-1 chain (46 aa).

At 1–12 (MWRLWKLYDPRR) the chain is on the cytoplasmic side. Residues 13–33 (VLIGIFSWLAVLALVIHFILL) form a helical membrane-spanning segment. Position 29 (His-29) interacts with a bacteriochlorophyll. At 34 to 46 (STDRFNWVGGAAN) the chain is on the periplasmic side.

Belongs to the antenna complex alpha subunit family. The core complex is formed by different alpha and beta chains, binding bacteriochlorophyll molecules, and arranged most probably in tetrameric structures disposed around the reaction center. The non-pigmented gamma chains may constitute additional components.

The protein resides in the cell inner membrane. Antenna complexes are light-harvesting systems, which transfer the excitation energy to the reaction centers. The polypeptide is Light-harvesting protein B800/850/890 alpha-1 chain (Halorhodospira halophila (strain DSM 244 / SL1) (Ectothiorhodospira halophila (strain DSM 244 / SL1))).